The sequence spans 349 residues: MSEVKSRKKSGTKGAPAEPGKRNEGGKSPEARGGGGRGWADPRTGVSLLSLGTCLGLAWFVFQQSEKFAKVENQYQLLKMETSEFQGLQSKISLISEKCQKSEAIIEQLKAFQIITHLKHLQEEIYEVKTWSSRISEKQDILNNNLTTVSQDVAKADQSTTSMAKDIGLKITTIKTDIRRMSGLVTDVTSLTDSVQELENKIEKVEKNTVKNIGDLLSSSIDRTAMLRKTASENSQRINSVKKILSELQGDFNKHTDRLLSLESDRAKVLKTVTFANDLKPKVYNLKKDFSRLEPLVNDLTLRIGRLVTDLQQREKEIAFLKEKISNLTTVRAEIKDMKDEIKHISDMD.

Over residues 1-11 the composition is skewed to basic residues; the sequence is MSEVKSRKKSG. Positions 1–39 are disordered; that stretch reads MSEVKSRKKSGTKGAPAEPGKRNEGGKSPEARGGGGRGW. A compositionally biased stretch (basic and acidic residues) spans 19–30; sequence PGKRNEGGKSPE. The chain crosses the membrane as a helical span at residues 45-61; sequence GVSLLSLGTCLGLAWFV. Asn-145 carries N-linked (GlcNAc...) asparagine glycosylation. Coiled-coil stretches lie at residues 183–216 and 304–347; these read GLVT…IGDL and IGRL…HISD. The N-linked (GlcNAc...) asparagine glycan is linked to Asn-327.

In terms of processing, N-glycosylated.

The protein resides in the endoplasmic reticulum membrane. Target of p53/TP53 with pro-apoptotic function. This Bos taurus (Bovine) protein is Inhibitor of nuclear factor kappa-B kinase-interacting protein (IKBIP).